The sequence spans 199 residues: MRLTAKQITWLKVCLHLAGFLPLLWLFWAINHGGLSADPVKDIQHFTGRTALKFLLATLLVSPLARYAKQPLLIRTRRLLGLWCFVWATLHLTSYALLELGIHNLALLGSELISRPYLTLGIISWLVLLALTLTSTQFAQRKLGKRWQTLHNVVYLVAILAPIHYLWSVKILSPQPVIYAALALALLALRYRKFRQWWR.

Helical transmembrane passes span 10-30 (WLKV…FWAI), 82-102 (LWCF…ELGI), 116-136 (PYLT…LTST), and 153-173 (VVYL…KILS).

It belongs to the MsrQ family. In terms of assembly, heterodimer of a catalytic subunit (MsrP) and a heme-binding subunit (MsrQ). FMN serves as cofactor. The cofactor is heme b.

It localises to the cell inner membrane. Its function is as follows. Part of the MsrPQ system that repairs oxidized periplasmic proteins containing methionine sulfoxide residues (Met-O), using respiratory chain electrons. Thus protects these proteins from oxidative-stress damage caused by reactive species of oxygen and chlorine generated by the host defense mechanisms. MsrPQ is essential for the maintenance of envelope integrity under bleach stress, rescuing a wide series of structurally unrelated periplasmic proteins from methionine oxidation, including the primary periplasmic chaperone SurA and the lipoprotein Pal. MsrQ provides electrons for reduction to the reductase catalytic subunit MsrP, using the quinone pool of the respiratory chain. This is Protein-methionine-sulfoxide reductase heme-binding subunit MsrQ from Salmonella agona (strain SL483).